A 484-amino-acid polypeptide reads, in one-letter code: UDP-glycosyltransferase 73B4 (484 aa).

His18 (proton acceptor) is an active-site residue. His18 and Asn89 together coordinate an anthocyanidin. Asp129 (charge relay) is an active-site residue. Ala356, Gln358, His373, Trp376, Asn377, Ser378, and Glu381 together coordinate UDP-alpha-D-glucose. Ala396 is an an anthocyanidin binding site. UDP-alpha-D-glucose contacts are provided by Glu397 and Gln398.

It belongs to the UDP-glycosyltransferase family. As to expression, specifically expressed in roots.

It carries out the reaction a flavonol + UDP-alpha-D-glucose = a flavonol 3-O-beta-D-glucoside + UDP + H(+). Possesses quercetin 3-O-glucosyltransferase and low 7-O-glucosyltransferase activities in vitro. Also active in vitro on benzoates and benzoate derivatives. Can detoxify the explosive 2,4,6-trinitrotoluene in plant by forming O- or C-glucose conjugates. This Arabidopsis thaliana (Mouse-ear cress) protein is UDP-glycosyltransferase 73B4 (UGT73B4).